A 66-amino-acid chain; its full sequence is MKAADVRAKSLDQLNDELGTLKKEQFNLRFQKATGQLEKTARVKQVRRDIARIKTIARQKAAESKA.

The protein belongs to the universal ribosomal protein uL29 family.

This is Large ribosomal subunit protein uL29 from Brucella abortus (strain S19).